Here is a 382-residue protein sequence, read N- to C-terminus: Dual-specificity RNA methyltransferase RlmN (382 aa).

E96 (proton acceptor) is an active-site residue. The 241-residue stretch at 102-342 folds into the Radical SAM core domain; it reads QGKRGTLCVS…VRTTRGEDID (241 aa). C109 and C345 form a disulfide bridge. Residues C116, C120, and C123 each contribute to the [4Fe-4S] cluster site. Residues 170-171, S202, 224-226, and N302 contribute to the S-adenosyl-L-methionine site; these read GE and SLH. Residue C345 is the S-methylcysteine intermediate of the active site.

This sequence belongs to the radical SAM superfamily. RlmN family. [4Fe-4S] cluster serves as cofactor.

The protein resides in the cytoplasm. The catalysed reaction is adenosine(2503) in 23S rRNA + 2 reduced [2Fe-2S]-[ferredoxin] + 2 S-adenosyl-L-methionine = 2-methyladenosine(2503) in 23S rRNA + 5'-deoxyadenosine + L-methionine + 2 oxidized [2Fe-2S]-[ferredoxin] + S-adenosyl-L-homocysteine. It carries out the reaction adenosine(37) in tRNA + 2 reduced [2Fe-2S]-[ferredoxin] + 2 S-adenosyl-L-methionine = 2-methyladenosine(37) in tRNA + 5'-deoxyadenosine + L-methionine + 2 oxidized [2Fe-2S]-[ferredoxin] + S-adenosyl-L-homocysteine. Specifically methylates position 2 of adenine 2503 in 23S rRNA and position 2 of adenine 37 in tRNAs. m2A2503 modification seems to play a crucial role in the proofreading step occurring at the peptidyl transferase center and thus would serve to optimize ribosomal fidelity. In Pseudomonas savastanoi pv. phaseolicola (strain 1448A / Race 6) (Pseudomonas syringae pv. phaseolicola (strain 1448A / Race 6)), this protein is Dual-specificity RNA methyltransferase RlmN.